Reading from the N-terminus, the 388-residue chain is Chorismate synthase (388 aa).

Positions 39 and 45 each coordinate NADP(+). FMN-binding positions include 132 to 134 (RSS), 251 to 252 (NA), Gly296, 311 to 315 (KPIPT), and Arg337.

The protein belongs to the chorismate synthase family. In terms of assembly, homotetramer. The cofactor is FMNH2.

The catalysed reaction is 5-O-(1-carboxyvinyl)-3-phosphoshikimate = chorismate + phosphate. It functions in the pathway metabolic intermediate biosynthesis; chorismate biosynthesis; chorismate from D-erythrose 4-phosphate and phosphoenolpyruvate: step 7/7. Functionally, catalyzes the anti-1,4-elimination of the C-3 phosphate and the C-6 proR hydrogen from 5-enolpyruvylshikimate-3-phosphate (EPSP) to yield chorismate, which is the branch point compound that serves as the starting substrate for the three terminal pathways of aromatic amino acid biosynthesis. This reaction introduces a second double bond into the aromatic ring system. The protein is Chorismate synthase of Staphylococcus aureus (strain MRSA252).